The chain runs to 245 residues: Probable phosphatase KPK_3500 (245 aa).

Zn(2+) contacts are provided by H7, H9, H15, H40, E73, H101, H131, D192, and H194.

Belongs to the PHP family. In terms of assembly, homotrimer. Requires Zn(2+) as cofactor.

The sequence is that of Probable phosphatase KPK_3500 from Klebsiella pneumoniae (strain 342).